The sequence spans 68 residues: Cx9C motif-containing protein 4 (68 aa).

The CHCH domain occupies 4-46; that stretch reads KDPCQKQACEIQKCLQANNYLESKCQAVIQELRKCCARYPKGR. 2 short sequence motifs (cx9C motif) span residues 7–17 and 28–38; these read CQKQACEIQKC and CQAVIQELRKC. Disulfide bonds link Cys7–Cys38, Cys17–Cys28, and Cys39–Cys50.

The protein belongs to the CMC4 family. Expressed in many tissues.

It is found in the mitochondrion. This Mus musculus (Mouse) protein is Cx9C motif-containing protein 4 (Cmc4).